The following is a 278-amino-acid chain: MSTLRVLHEKSELGKTTVYPKEYTPHLLLPIPRDLNRKTLNVNVSEPPPFYGYDLWNAYELSWLNEKGKPFAARGEFIIPATSSHLIESKSFKLYLNSFNNERFADAAAVSQTMKRDLSKRVNESVTVNFILHETEIPVAYSPKGSLLDVLDIAIDTYSPDPNLLSTSQETVTETLYSHLLKSNCPVTGQPDWGSIEIHYTGPKIDHAQLLKYIISYRNHEEFHEACVERFFMDILRHCRPQELTVQARYTRRGGLDINPYRSTNPTFSVQNHRSFRQ.

87–89 (IES) provides a ligand contact to substrate. 89-90 (SK) serves as a coordination point for NADPH. C185 (thioimide intermediate) is an active-site residue. D192 (proton donor) is an active-site residue. 224–225 (HE) provides a ligand contact to substrate. 253 to 254 (RG) contributes to the NADPH binding site. Positions 255 to 278 (GLDINPYRSTNPTFSVQNHRSFRQ) are disordered. The segment covering 261–278 (YRSTNPTFSVQNHRSFRQ) has biased composition (polar residues).

The protein belongs to the GTP cyclohydrolase I family. QueF type 2 subfamily. As to quaternary structure, homodimer.

It is found in the cytoplasm. It carries out the reaction 7-aminomethyl-7-carbaguanine + 2 NADP(+) = 7-cyano-7-deazaguanine + 2 NADPH + 3 H(+). The protein operates within tRNA modification; tRNA-queuosine biosynthesis. Its function is as follows. Catalyzes the NADPH-dependent reduction of 7-cyano-7-deazaguanine (preQ0) to 7-aminomethyl-7-deazaguanine (preQ1). This chain is NADPH-dependent 7-cyano-7-deazaguanine reductase, found in Coxiella burnetii (strain CbuK_Q154) (Coxiella burnetii (strain Q154)).